A 299-amino-acid chain; its full sequence is Diphthine methyl ester synthase 1 (299 aa).

Residues leucine 9, aspartate 85, glycine 88, 113–114 (SV), leucine 164, leucine 222, and histidine 247 each bind S-adenosyl-L-methionine.

Belongs to the diphthine synthase family.

It is found in the cytoplasm. The enzyme catalyses 2-[(3S)-amino-3-carboxypropyl]-L-histidyl-[translation elongation factor 2] + 4 S-adenosyl-L-methionine = diphthine methyl ester-[translation elongation factor 2] + 4 S-adenosyl-L-homocysteine + 3 H(+). The protein operates within protein modification; peptidyl-diphthamide biosynthesis. In terms of biological role, S-adenosyl-L-methionine-dependent methyltransferase that catalyzes four methylations of the modified target histidine residue in translation elongation factor 2 (EF-2), to form an intermediate called diphthine methyl ester. The four successive methylation reactions represent the second step of diphthamide biosynthesis. This Candida albicans (strain SC5314 / ATCC MYA-2876) (Yeast) protein is Diphthine methyl ester synthase 1 (DPH5).